Reading from the N-terminus, the 473-residue chain is H(+)/Cl(-) exchange transporter ClcA (473 aa).

Over M1–P32 the chain is Cytoplasmic. A helical membrane pass occupies residues L33–V69. The Periplasmic portion of the chain corresponds to Q70–F76. Residues L77–F100 traverse the membrane as a helical segment. A Selectivity filter part_1 motif is present at residues G106–P110. Residue S107 participates in chloride binding. Positions I109 to L116 form an intramembrane region, helical. Topologically, residues E117–R123 are cytoplasmic. The next 2 helical transmembrane spans lie at W124–A141 and E148–F166. Positions G146 to P150 match the Selectivity filter part_2 motif. Topologically, residues R167–T176 are cytoplasmic. 2 consecutive intramembrane regions (helical) follow at residues L177–A189 and P193–I201. The Cytoplasmic portion of the chain corresponds to E202–S214. A helical membrane pass occupies residues I215–F232. Topologically, residues N233 to L252 are periplasmic. A helical transmembrane segment spans residues W253 to Q281. Over R282–E287 the chain is Cytoplasmic. The chain crosses the membrane as a helical span at residues I288–E309. The Periplasmic segment spans residues P310 to S329. Transmembrane regions (helical) follow at residues V330 to S349 and G355 to A376. Residues G355–P359 carry the Selectivity filter part_3 motif. 2 residues coordinate chloride: I356 and F357. Residues V377–A386 are Periplasmic-facing. Residues G387–S401 constitute an intramembrane region (helical). The note=Loop between two helices intramembrane region spans V402–A404. The segment at residues P405–T416 is an intramembrane region (helical). Positions D417–L421 form an intramembrane region, note=Loop between two helices. The helical transmembrane segment at I422–F438 threads the bilayer. At L439–T473 the chain is on the cytoplasmic side. Y445 serves as a coordination point for chloride.

Belongs to the chloride channel (TC 2.A.49) family. ClcA subfamily. In terms of assembly, homodimer.

Its subcellular location is the cell inner membrane. It catalyses the reaction 2 chloride(in) + H(+)(out) = 2 chloride(out) + H(+)(in). Functionally, proton-coupled chloride transporter. Functions as antiport system and exchanges two chloride ions for 1 proton. Probably acts as an electrical shunt for an outwardly-directed proton pump that is linked to amino acid decarboxylation, as part of the extreme acid resistance (XAR) response. The protein is H(+)/Cl(-) exchange transporter ClcA of Salmonella paratyphi A (strain AKU_12601).